Reading from the N-terminus, the 409-residue chain is Argininosuccinate synthase (409 aa).

ATP-binding positions include 16-24 (AYSGGLDTS) and Ala44. 2 residues coordinate L-citrulline: Tyr96 and Ser101. Residue Gly126 participates in ATP binding. Residues Thr128, Asn132, and Asp133 each coordinate L-aspartate. Position 132 (Asn132) interacts with L-citrulline. Residues Arg136, Ser185, Ser194, Glu270, and Tyr282 each coordinate L-citrulline.

It belongs to the argininosuccinate synthase family. Type 1 subfamily. As to quaternary structure, homotetramer.

The protein resides in the cytoplasm. It carries out the reaction L-citrulline + L-aspartate + ATP = 2-(N(omega)-L-arginino)succinate + AMP + diphosphate + H(+). The protein operates within amino-acid biosynthesis; L-arginine biosynthesis; L-arginine from L-ornithine and carbamoyl phosphate: step 2/3. In Shewanella piezotolerans (strain WP3 / JCM 13877), this protein is Argininosuccinate synthase.